The chain runs to 299 residues: MKLLMLCREPRLYSCQRLKESAEDNGHQIDILDPNRCLLKLSKNAPHFELYYQVNSKSEPYLLPDYDAIIPRFGSTSTRMGCAVLRHFRTKNVFCLNDDVAFLKARDKWLSLQLLTEQGIAVPNSALSGAEFSATQAILQIQSPTILKTLHGSQGIGVILAENRKSAVSIMETLTQADVPLLMQDFIQEAQGTDIRCFVIGDKVVATMQRIGQEDEFRANFHRGGSAEKIQLTEQEKVLALKATKCLGLDVAGVDLIRSKQGLLVLEVNASPGLEMIEKTSGIDIALQMIVHIEKQFKR.

Residues 112–294 (LQLLTEQGIA…IALQMIVHIE (183 aa)) form the ATP-grasp domain. Residues Lys148, 185-186 (DF), Asp194, and 218-220 (RAN) contribute to the ATP site. Mg(2+) contacts are provided by Asp255, Glu267, and Asn269. Mn(2+)-binding residues include Asp255, Glu267, and Asn269.

This sequence belongs to the RimK family. Requires Mg(2+) as cofactor. Mn(2+) serves as cofactor.

The polypeptide is Probable alpha-L-glutamate ligase (Histophilus somni (strain 2336) (Haemophilus somnus)).